The primary structure comprises 289 residues: Epoxyqueuosine reductase (289 aa).

The active-site Proton donor is Asp-111. Positions 156–185 constitute a 4Fe-4S ferredoxin-type domain; that stretch reads QGDRPHSQHCGTCTRCLEACPTQAIVEPFV. [4Fe-4S] cluster is bound by residues Cys-165, Cys-168, Cys-171, Cys-175, Cys-191, Cys-219, Cys-222, and Cys-226.

Belongs to the QueG family. As to quaternary structure, monomer. Cob(II)alamin serves as cofactor. It depends on [4Fe-4S] cluster as a cofactor.

It is found in the cytoplasm. The enzyme catalyses epoxyqueuosine(34) in tRNA + AH2 = queuosine(34) in tRNA + A + H2O. Its pathway is tRNA modification; tRNA-queuosine biosynthesis. Functionally, catalyzes the conversion of epoxyqueuosine (oQ) to queuosine (Q), which is a hypermodified base found in the wobble positions of tRNA(Asp), tRNA(Asn), tRNA(His) and tRNA(Tyr). This Synechocystis sp. (strain ATCC 27184 / PCC 6803 / Kazusa) protein is Epoxyqueuosine reductase.